A 508-amino-acid chain; its full sequence is Photosystem II CP47 reaction center protein (508 aa).

Transmembrane regions (helical) follow at residues 21–36 (SVHI…WAGS), 101–115 (IVFS…IWHW), 140–156 (GIHL…FGAF), 203–218 (IAAG…FHLS), 237–252 (VLSS…AFVV), and 457–472 (TFAL…HGAR).

The protein belongs to the PsbB/PsbC family. PsbB subfamily. As to quaternary structure, PSII is composed of 1 copy each of membrane proteins PsbA, PsbB, PsbC, PsbD, PsbE, PsbF, PsbH, PsbI, PsbJ, PsbK, PsbL, PsbM, PsbT, PsbX, PsbY, PsbZ, Psb30/Ycf12, at least 3 peripheral proteins of the oxygen-evolving complex and a large number of cofactors. It forms dimeric complexes. Binds multiple chlorophylls. PSII binds additional chlorophylls, carotenoids and specific lipids. is required as a cofactor.

Its subcellular location is the plastid. The protein resides in the chloroplast thylakoid membrane. In terms of biological role, one of the components of the core complex of photosystem II (PSII). It binds chlorophyll and helps catalyze the primary light-induced photochemical processes of PSII. PSII is a light-driven water:plastoquinone oxidoreductase, using light energy to abstract electrons from H(2)O, generating O(2) and a proton gradient subsequently used for ATP formation. The chain is Photosystem II CP47 reaction center protein from Oryza nivara (Indian wild rice).